Reading from the N-terminus, the 269-residue chain is C-type lectin domain family 2 member G (269 aa).

Over 1–107 (MNITRASLPM…SPESSAKLYC (107 aa)) the chain is Cytoplasmic. Residues 108–128 (CCGVIMVLTVAVVALSVALPA) form a helical; Signal-anchor for type II membrane protein membrane-spanning segment. Topologically, residues 129 to 269 (TKTEQILINK…SLHCPTPVPV (141 aa)) are extracellular. The C-type lectin domain occupies 150–254 (VGNKCFYFSE…HYIPRIWICS (105 aa)). N-linked (GlcNAc...) asparagine glycosylation occurs at Asn163. Cys171 and Cys253 are oxidised to a cystine.

As to expression, detected in vagina, eye, tongue, stomach and spleen.

Its subcellular location is the cell membrane. In terms of biological role, inhibits osteoclast formation. In Mus musculus (Mouse), this protein is C-type lectin domain family 2 member G (Clec2g).